We begin with the raw amino-acid sequence, 243 residues long: Probable transcriptional regulatory protein BRE_29 (243 aa).

The protein belongs to the TACO1 family.

The protein localises to the cytoplasm. The protein is Probable transcriptional regulatory protein BRE_29 of Borrelia recurrentis (strain A1).